Here is a 411-residue protein sequence, read N- to C-terminus: cAMP-dependent protein kinase regulatory subunit (411 aa).

A disordered region spans residues 1 to 144 (MAESAFPSAQ…SWTPPYHEKT (144 aa)). Residues 23-159 (AAFQKISEED…RLKTAVSSNF (137 aa)) form a dimerization and phosphorylation region. Residues 46-58 (SANAAAASSSTGS) show a composition bias toward low complexity. Acidic residues predominate over residues 85–96 (EEDEEGADEFPP). Over residues 119 to 136 (TSVSAESLNPTSAGSDSW) the composition is skewed to polar residues. Ser120 carries the phosphoserine modification. 3',5'-cyclic AMP-binding positions include 160–289 (LFSH…FLEE), Glu238, Arg247, 292–411 (LLSS…PVPA), Glu359, and Arg368.

It belongs to the cAMP-dependent kinase regulatory chain family. Tetramer, composed of 2 regulatory (R) and 2 catalytic (C) subunits. In the presence of cAMP it dissociates into 2 active monomeric C subunits and an R dimer.

This chain is cAMP-dependent protein kinase regulatory subunit (pkaR), found in Aspergillus niger.